The primary structure comprises 233 residues: MKSAILVFPGINRERDMARALQLASGSEPAMVWHADTELPKGTDLVVVPGGFSYGDYLRCGAIAARAPVMDAVRKFASDGGLVLGVCNGFQILCESGLLPGVLMRNARLKFICHDVHLRVERSDTPFTRGYNAGQVIRVPVAHGEGNYEADEETLQRLEGDGRVLYRYCSASGEVGEAHNINGAAASIAGIVSERGNVLGMMPHPENHVEAIMGCTDGRGLFAGLVEHLAKAA.

Residues 3-233 (SAILVFPGIN…GLVEHLAKAA (231 aa)) enclose the Glutamine amidotransferase type-1 domain. Cys-87 functions as the Nucleophile in the catalytic mechanism. Catalysis depends on residues His-204 and Glu-206.

As to quaternary structure, part of the FGAM synthase complex composed of 1 PurL, 1 PurQ and 2 PurS subunits.

Its subcellular location is the cytoplasm. It catalyses the reaction N(2)-formyl-N(1)-(5-phospho-beta-D-ribosyl)glycinamide + L-glutamine + ATP + H2O = 2-formamido-N(1)-(5-O-phospho-beta-D-ribosyl)acetamidine + L-glutamate + ADP + phosphate + H(+). The catalysed reaction is L-glutamine + H2O = L-glutamate + NH4(+). Its pathway is purine metabolism; IMP biosynthesis via de novo pathway; 5-amino-1-(5-phospho-D-ribosyl)imidazole from N(2)-formyl-N(1)-(5-phospho-D-ribosyl)glycinamide: step 1/2. In terms of biological role, part of the phosphoribosylformylglycinamidine synthase complex involved in the purines biosynthetic pathway. Catalyzes the ATP-dependent conversion of formylglycinamide ribonucleotide (FGAR) and glutamine to yield formylglycinamidine ribonucleotide (FGAM) and glutamate. The FGAM synthase complex is composed of three subunits. PurQ produces an ammonia molecule by converting glutamine to glutamate. PurL transfers the ammonia molecule to FGAR to form FGAM in an ATP-dependent manner. PurS interacts with PurQ and PurL and is thought to assist in the transfer of the ammonia molecule from PurQ to PurL. The chain is Phosphoribosylformylglycinamidine synthase subunit PurQ from Rhodopseudomonas palustris (strain BisB18).